The primary structure comprises 79 residues: D-alanyl carrier protein (79 aa).

The Carrier domain maps to 1-77 (MTVEEKIIDA…KIVEGVKELQ (77 aa)). An O-(pantetheine 4'-phosphoryl)serine modification is found at S35.

This sequence belongs to the DltC family. 4'-phosphopantetheine is transferred from CoA to a specific serine of apo-DCP.

It is found in the cytoplasm. It participates in cell wall biogenesis; lipoteichoic acid biosynthesis. Carrier protein involved in the D-alanylation of lipoteichoic acid (LTA). The loading of thioester-linked D-alanine onto DltC is catalyzed by D-alanine--D-alanyl carrier protein ligase DltA. The DltC-carried D-alanyl group is further transferred to cell membrane phosphatidylglycerol (PG) by forming an ester bond, probably catalyzed by DltD. D-alanylation of LTA plays an important role in modulating the properties of the cell wall in Gram-positive bacteria, influencing the net charge of the cell wall. In Streptococcus uberis (strain ATCC BAA-854 / 0140J), this protein is D-alanyl carrier protein.